Reading from the N-terminus, the 195-residue chain is MKAALFLSALASTAVGVVAEELKIDVTLPVICERKTQKGDGVHMHYRGTLKDSGKQFDASYDRGTPLSFKVGAGQVIKGWDEGLLDMCIGEKRVLTIPPEFGYGQRAIGPIPAGSTLVFETELVGIDGVPKPEKIETKVVEGAESAAEAISEATEAAATASQKVAGKVAEAIVDAAKAAKTIIADTDDAPEHEEL.

The signal sequence occupies residues 1–19 (MKAALFLSALASTAVGVVA). The 89-residue stretch at 39 to 127 (GDGVHMHYRG…VFETELVGID (89 aa)) folds into the PPIase FKBP-type domain. The Prevents secretion from ER motif lies at 192-195 (HEEL).

The protein belongs to the FKBP-type PPIase family. FKBP2 subfamily.

The protein localises to the endoplasmic reticulum. It carries out the reaction [protein]-peptidylproline (omega=180) = [protein]-peptidylproline (omega=0). Inhibited by both FK506 and rapamycin. In terms of biological role, PPIases accelerate the folding of proteins. It catalyzes the cis-trans isomerization of proline imidic peptide bonds in oligopeptides. The chain is FK506-binding protein 2 (FPR2) from Gibberella zeae (strain ATCC MYA-4620 / CBS 123657 / FGSC 9075 / NRRL 31084 / PH-1) (Wheat head blight fungus).